The primary structure comprises 219 residues: Occludin/ELL domain-containing protein 1 (219 aa).

The tract at residues 1-110 (MQIHAGPASR…DYELKYPPVT (110 aa)) is disordered. A compositionally biased stretch (low complexity) spans 17 to 43 (LARLSGPEATCNSRPAARGRQRAAAPR). Residues 72 to 93 (VFADELRPREPLHPEKHPRDLG) are compositionally biased toward basic and acidic residues. The 111-residue stretch at 100–210 (PDYELKYPPV…QIRKFDDQQD (111 aa)) folds into the OCEL domain.

It belongs to the ELL/occludin family.

This Mus musculus (Mouse) protein is Occludin/ELL domain-containing protein 1 (Ocel1).